A 1117-amino-acid polypeptide reads, in one-letter code: MPFITSRPVAKNSSHSLSETDLNQSKGQPFQPSPTKKLGSMQQRRRSSTIRHALSSLLGGANVHSPAVLNNTTKGGNNNGNIRSSNTDAQLLGKKQNKQPPPNARRHSTTAIQGSISDSATTTPRSSTSDTNRRTSGRLSVDQEPRISGGRYSQIEEDSTVLDFDDDHNSSAVVSSDLSSTSLTRLANSKKFNEQFLIEYLTARGLLGPKTVLSNEYLKISISTSGESVFLPTISSNDDEYLSRLNGLNDGTDDAEADFFMDGIDQQEGNTPSLATTAAATESGGSINENRDTLLRENNSGDHPGSGSELNTRSVEIDSSMVSYSIAVIVSVKKPTRFTDMQLELCSRVKVFWNTGVPPTKTFNEEFYNAASMKWNLNDENFDLFVPLSISPDDQMIENNSNDRQMRLFKNIPTEERLYLDKTKTKASLLNAIDVNKTHLYQPGDYVFLVPVVFSNHIPETIYLPSARVSYRLRLATKAINRKGFYRQDSNSPQPIVSPDSSSSLSSTTSSLKLTETESAQAHRRISNTLFSKVKNHLHMSSHQLKNEESGEEDIFAEYPIKVIRTPPPVAVSTANKPIYINRVWTDSLSYEISFAQKYVSLNSEVPIKIKLAPICKNVCVKRIHVSITERVTFVSKGYEYEYDQTDPVAKDPYNPYYLDFASKRRKERSVSLFEIRTKEKGTRALREEIVENSFNDNLLSYSPFDDDSDSKGNPKERLGITEPIIIETKLKFPKYEDLDKRTAKIIPPYGIDAYTSIPNPEHAVANGPSHRRPSVIGFLSGHKGSKSHEENEKPVYDPKFHQTIIKSNSGLPVKTHTRLNTPKRGLYLDSLHFSNVYCRHKLEIMLRISKPDPECPSKLRHYEVLIDTPIFLVSEQCNSGNMELPTYDMATMEGKGNQVPLSMNSDFFGNTCPPPPTFEEAISVPASPIVSPMGSPNIMASYDPDLLSIQQLNLSRTTSVSGPSGYSDDAGVPNVNRNSISNANAMNGSISNSAFVSGNSGQGVARARATSVNDRSRFNNLDKLLSTPSPVNRSHNSSPTNGLSQANGTVRIPNATTENSKDKQNEFFKKGYTLANVKDDEEQEGIVSSSSADSLLSHGNEPPRYDEIVPLMSDEE.

2 disordered regions span residues 1-48 and 63-155; these read MPFI…RRSS and VHSP…YSQI. A compositionally biased stretch (polar residues) spans 11 to 34; sequence KNSSHSLSETDLNQSKGQPFQPSP. At S18 the chain carries Phosphoserine. Residues 70–81 show a composition bias toward low complexity; the sequence is NNTTKGGNNNGN. Position 115 is a phosphoserine (S115). A compositionally biased stretch (low complexity) spans 117–130; sequence SDSATTTPRSSTSD. Phosphoserine is present on S140. Residue K191 forms a Glycyl lysine isopeptide (Lys-Gly) (interchain with G-Cter in ubiquitin) linkage. Disordered stretches follow at residues 275–312 and 486–523; these read ATTA…ELNT and YRQD…AQAH. Position 286 is a phosphoserine (S286). The segment covering 501–519 has biased composition (low complexity); sequence SSSSLSSTTSSLKLTETES. S527 and S550 each carry phosphoserine. Residues K577, K651, and K712 each participate in a glycyl lysine isopeptide (Lys-Gly) (interchain with G-Cter in ubiquitin) cross-link. S775 carries the post-translational modification Phosphoserine. Residues K794, K807, and K1024 each participate in a glycyl lysine isopeptide (Lys-Gly) (interchain with G-Cter in ubiquitin) cross-link. 2 disordered regions span residues 1016–1065 and 1079–1117; these read RSRF…KDKQ and KDDE…SDEE. Polar residues predominate over residues 1027–1059; the sequence is STPSPVNRSHNSSPTNGLSQANGTVRIPNATTE. Phosphoserine is present on S1035. A compositionally biased stretch (low complexity) spans 1089–1098; the sequence is SSSSADSLLS.

It belongs to the CSR2 family.

The protein localises to the cytoplasm. Its function is as follows. May be involved in cell wall organization and biogenesis. The polypeptide is Protein ECM21 (ECM21) (Saccharomyces cerevisiae (strain ATCC 204508 / S288c) (Baker's yeast)).